A 298-amino-acid polypeptide reads, in one-letter code: Porphobilinogen deaminase (298 aa).

Cys-242 carries the S-(dipyrrolylmethanemethyl)cysteine modification.

Belongs to the HMBS family. As to quaternary structure, monomer. It depends on dipyrromethane as a cofactor.

It carries out the reaction 4 porphobilinogen + H2O = hydroxymethylbilane + 4 NH4(+). The protein operates within porphyrin-containing compound metabolism; protoporphyrin-IX biosynthesis; coproporphyrinogen-III from 5-aminolevulinate: step 2/4. Its function is as follows. Tetrapolymerization of the monopyrrole PBG into the hydroxymethylbilane pre-uroporphyrinogen in several discrete steps. The chain is Porphobilinogen deaminase from Fusobacterium nucleatum subsp. nucleatum (strain ATCC 25586 / DSM 15643 / BCRC 10681 / CIP 101130 / JCM 8532 / KCTC 2640 / LMG 13131 / VPI 4355).